Here is a 469-residue protein sequence, read N- to C-terminus: Cell division protein FtsP (469 aa).

Positions 1 to 27 (MKLSRRQFLQRSTLAGVATVTPTSLWA) form a signal peptide, tat-type signal.

Belongs to the FtsP family. Post-translationally, predicted to be exported by the Tat system. The position of the signal peptide cleavage has not been experimentally proven.

It localises to the periplasm. In terms of biological role, cell division protein that is required for growth during stress conditions. May be involved in protecting or stabilizing the divisomal assembly under conditions of stress. The protein is Cell division protein FtsP of Glaesserella parasuis serovar 5 (strain SH0165) (Haemophilus parasuis).